The chain runs to 701 residues: Glycine--tRNA ligase beta subunit (701 aa).

It belongs to the class-II aminoacyl-tRNA synthetase family. In terms of assembly, tetramer of two alpha and two beta subunits.

It is found in the cytoplasm. The enzyme catalyses tRNA(Gly) + glycine + ATP = glycyl-tRNA(Gly) + AMP + diphosphate. This chain is Glycine--tRNA ligase beta subunit, found in Anaeromyxobacter dehalogenans (strain 2CP-1 / ATCC BAA-258).